Reading from the N-terminus, the 430-residue chain is UPF0597 protein BDI_1130 (430 aa).

It belongs to the UPF0597 family.

The protein is UPF0597 protein BDI_1130 of Parabacteroides distasonis (strain ATCC 8503 / DSM 20701 / CIP 104284 / JCM 5825 / NCTC 11152).